The sequence spans 859 residues: MQEQYIHSEIEAEVQKYWADNKTFEVTEDPAKEKFYCLSMFPYPSGRLHMGHVRNYTIGDVVARFQRLQGKNVLQPIGWDAFGLPAENAAIKNATAPAPWTYENIDYMKNQLKMLGFGYDWSREIATCTPEYYRWEQWFFTKLYEKGLVYKKTSAVNWCPNDQTVLANEQVQDGCCWRCDTPVEQKEIPQWFIKITAYAEELLNDIDNLEGWPEQVKTMQRNWIGRSEGVEMTFKVKDSDDSFDIYTTRPDTVMGVTYVAIAAGHPLAEKAALNNPELAAFVEECKQSGTSEAELATMEKKGVATGLYAIHPLTGEEVPVWAANFVLMNYGTGAVMSVPAHDQRDYEFAKKYGLALKAVIKPADGEVDISEAAYTEKGVLFNSAEFDGLDFDGAFNAIADKLAAEGKGKRQVNFRLRDWGVSRQRYWGAPIPMVTLEDGTVMPTPEDQLPVILPEDVVMDGVQSPIKADKEWAKTQVNGQDALRETDTFDTFMESSWYYARYCSPKANEMLDPAKANYWLPVDQYIGGIEHACMHLLYFRFFHKLLRDAGLVNSNEPAKRLLTQGMVLADAFYYNNEKGARVWVSPLDVTVVEKDDKGRILKAVDTEGHELVYTGMSKMSKSKNNGIDPQVMVEKYGADTVRLFMMFASPPELTLEWQESGVEGAHRFIKRLWKLASEYSAAPATEALDVSALNADQKTLRRELHKTIAKVTDDLGRRQMFNTAVAAVMELMNHLQKAPLASAQDKALMNEALSAVVRLLYPIAPHVCFNLWRELGNSGAIEDAGWPATDESALVEDSKLIVVQVNGKVRAKLTVAADATKEQVEALGLAEDAVRKYTDGVTVRKVIYVPGKLLNIVAN.

The 'HIGH' region motif lies at 42 to 52; sequence PYPSGRLHMGH. Positions 618 to 622 match the 'KMSKS' region motif; that stretch reads KMSKS. K621 serves as a coordination point for ATP.

This sequence belongs to the class-I aminoacyl-tRNA synthetase family.

The protein resides in the cytoplasm. It catalyses the reaction tRNA(Leu) + L-leucine + ATP = L-leucyl-tRNA(Leu) + AMP + diphosphate. The polypeptide is Leucine--tRNA ligase (Shewanella amazonensis (strain ATCC BAA-1098 / SB2B)).